We begin with the raw amino-acid sequence, 671 residues long: E3 ubiquitin-protein ligase pub2 (671 aa).

In terms of domain architecture, C2 spans 1–112 (MENIRFEVQL…KDDYKTRITL (112 aa)). Residues 242 to 275 (GPLPAGWEMRLSEDYHVYFVDHSTKTTTWSDPRD) form the WW domain. Residues 338 to 671 (SVSDMKKKLL…IQETAGFGTE (334 aa)) enclose the HECT domain. C639 acts as the Glycyl thioester intermediate in catalysis.

In terms of assembly, interacts with the E2 ubiquitin-conjugating enzyme ubc4.

The protein localises to the membrane. It localises to the cytoplasm. It carries out the reaction S-ubiquitinyl-[E2 ubiquitin-conjugating enzyme]-L-cysteine + [acceptor protein]-L-lysine = [E2 ubiquitin-conjugating enzyme]-L-cysteine + N(6)-ubiquitinyl-[acceptor protein]-L-lysine.. It participates in protein modification; protein ubiquitination. E3 ubiquitin-protein ligase which accepts ubiquitin from an E2 ubiquitin-conjugating enzyme in the form of a thioester and then directly transfers the ubiquitin to targeted substrates. This chain is E3 ubiquitin-protein ligase pub2 (pub2), found in Schizosaccharomyces pombe (strain 972 / ATCC 24843) (Fission yeast).